Reading from the N-terminus, the 222-residue chain is Glutathione S-transferase 3 (222 aa).

The GST N-terminal domain occupies 2-83 (APLKLYGMPL…YIASKYASEG (82 aa)). Glutathione-binding positions include Ser-12, 13-14 (PN), 41-42 (HK), 54-55 (QI), and 67-68 (ES). A GST C-terminal domain is found at 89–219 (ATASAAKLEV…AAIPLPPPPS (131 aa)).

It belongs to the GST superfamily. Phi family. Homodimer.

It catalyses the reaction RX + glutathione = an S-substituted glutathione + a halide anion + H(+). Functionally, conjugation of reduced glutathione to a wide number of exogenous and endogenous hydrophobic electrophiles. Involved in the detoxification of certain herbicides. The chain is Glutathione S-transferase 3 from Zea mays (Maize).